The primary structure comprises 93 residues: Consomatin G1 (93 aa).

The signal sequence occupies residues 1 to 22 (MQTAYWVMLMMMVCITAPLPEG). A propeptide spanning residues 23–69 (GKPNSGIRGLVPNDLTPQHTLRSLISRRQTDVLLDATLLTTPAPEQR) is cleaved from the precursor. Cysteine 72 and cysteine 77 are oxidised to a cystine. Tryptophan 74 carries the post-translational modification D-tryptophan. A propeptide spanning residues 79-93 (PRPYPWRRRDLNGKR) is cleaved from the precursor.

The protein belongs to the conotoxin C superfamily. Consomatin family. Expressed by the venom duct.

It localises to the secreted. In terms of biological role, potently activates human somatostatin receptors (SSTR) with a specific activation of SSTR2 (EC(50)=2.6 nM). The protein is Consomatin G1 of Conus geographus (Geography cone).